Consider the following 151-residue polypeptide: Phosphoribosyl-AMP cyclohydrolase (151 aa).

Asp-94 lines the Mg(2+) pocket. A Zn(2+)-binding site is contributed by Cys-95. Mg(2+) contacts are provided by Asp-96 and Asp-98. Zn(2+)-binding residues include Cys-112 and Cys-119.

This sequence belongs to the PRA-CH family. As to quaternary structure, homodimer. Mg(2+) serves as cofactor. It depends on Zn(2+) as a cofactor.

The protein resides in the cytoplasm. It carries out the reaction 1-(5-phospho-beta-D-ribosyl)-5'-AMP + H2O = 1-(5-phospho-beta-D-ribosyl)-5-[(5-phospho-beta-D-ribosylamino)methylideneamino]imidazole-4-carboxamide. It functions in the pathway amino-acid biosynthesis; L-histidine biosynthesis; L-histidine from 5-phospho-alpha-D-ribose 1-diphosphate: step 3/9. In terms of biological role, catalyzes the hydrolysis of the adenine ring of phosphoribosyl-AMP. The polypeptide is Phosphoribosyl-AMP cyclohydrolase (Rhodopseudomonas palustris (strain ATCC BAA-98 / CGA009)).